We begin with the raw amino-acid sequence, 133 residues long: Small ribosomal subunit protein uS11 (133 aa).

This sequence belongs to the universal ribosomal protein uS11 family. As to quaternary structure, part of the 30S ribosomal subunit. Interacts with proteins S7 and S18. Binds to IF-3.

Located on the platform of the 30S subunit, it bridges several disparate RNA helices of the 16S rRNA. Forms part of the Shine-Dalgarno cleft in the 70S ribosome. This chain is Small ribosomal subunit protein uS11, found in Shouchella clausii (strain KSM-K16) (Alkalihalobacillus clausii).